The chain runs to 140 residues: uncharacterized protein (140 aa).

The protein localises to the mitochondrion. This is an uncharacterized protein from Homo sapiens (Human).